The primary structure comprises 201 residues: Homeobox protein ceh-28 (201 aa).

Over residues 72-84 (SYYSSPSQNQRSY) the composition is skewed to polar residues. The interval 72–94 (SYYSSPSQNQRSYQNHRQHSNPD) is disordered. The homeobox DNA-binding region spans 104-163 (KRKPRVLFTQHQVNELEERFKKQRYVTATEREELAQCLGLTATQVKIWFQNRRYKCKRLA).

This sequence belongs to the NK-2 homeobox family.

The protein resides in the nucleus. Probable transcription factor that regulates neuronal differention, including synapse assembly of the cholinergic motor neuron M4. Activates expression of growth factor, neuropeptide and transcription factor genes, such as TGF-beta dbl-1, FMRFamide-like flp-5 and transcription repressor zag-1, in the M4 neuron. Required for pharynx peristalsis. The chain is Homeobox protein ceh-28 from Caenorhabditis elegans.